Reading from the N-terminus, the 74-residue chain is ATP synthase subunit c (74 aa).

2 helical membrane-spanning segments follow: residues 5 to 25 (LAYI…LGVG) and 49 to 69 (LFIG…VALL).

Belongs to the ATPase C chain family. In terms of assembly, F-type ATPases have 2 components, F(1) - the catalytic core - and F(0) - the membrane proton channel. F(1) has five subunits: alpha(3), beta(3), gamma(1), delta(1), epsilon(1). F(0) has three main subunits: a(1), b(2) and c(10-14). The alpha and beta chains form an alternating ring which encloses part of the gamma chain. F(1) is attached to F(0) by a central stalk formed by the gamma and epsilon chains, while a peripheral stalk is formed by the delta and b chains.

Its subcellular location is the cell inner membrane. In terms of biological role, f(1)F(0) ATP synthase produces ATP from ADP in the presence of a proton or sodium gradient. F-type ATPases consist of two structural domains, F(1) containing the extramembraneous catalytic core and F(0) containing the membrane proton channel, linked together by a central stalk and a peripheral stalk. During catalysis, ATP synthesis in the catalytic domain of F(1) is coupled via a rotary mechanism of the central stalk subunits to proton translocation. Key component of the F(0) channel; it plays a direct role in translocation across the membrane. A homomeric c-ring of between 10-14 subunits forms the central stalk rotor element with the F(1) delta and epsilon subunits. This is ATP synthase subunit c from Ruegeria sp. (strain TM1040) (Silicibacter sp.).